The primary structure comprises 390 residues: 4-hydroxy-3-methylbut-2-en-1-yl diphosphate synthase (flavodoxin) (390 aa).

4 residues coordinate [4Fe-4S] cluster: C281, C284, C316, and E323.

It belongs to the IspG family. [4Fe-4S] cluster serves as cofactor.

The catalysed reaction is (2E)-4-hydroxy-3-methylbut-2-enyl diphosphate + oxidized [flavodoxin] + H2O + 2 H(+) = 2-C-methyl-D-erythritol 2,4-cyclic diphosphate + reduced [flavodoxin]. Its pathway is isoprenoid biosynthesis; isopentenyl diphosphate biosynthesis via DXP pathway; isopentenyl diphosphate from 1-deoxy-D-xylulose 5-phosphate: step 5/6. Converts 2C-methyl-D-erythritol 2,4-cyclodiphosphate (ME-2,4cPP) into 1-hydroxy-2-methyl-2-(E)-butenyl 4-diphosphate. The protein is 4-hydroxy-3-methylbut-2-en-1-yl diphosphate synthase (flavodoxin) of Salinispora tropica (strain ATCC BAA-916 / DSM 44818 / JCM 13857 / NBRC 105044 / CNB-440).